The primary structure comprises 1528 residues: Mitogen-activated protein kinase kinae kinase MCK1 (1528 aa).

A compositionally biased stretch (low complexity) spans 1–11; the sequence is MYPGSSQSRPY. Disordered stretches follow at residues 1 to 84, 109 to 208, 303 to 418, 449 to 481, 607 to 652, 695 to 731, 746 to 786, 811 to 929, 943 to 1012, and 1086 to 1191; these read MYPG…PAPR, ATAP…VPGI, VHAR…NNVR, INGR…KLPF, VKPP…EARL, GKPV…APSA, VQGS…SQPM, SANN…SDDG, KKAK…EDGK, and ATPL…ALLR. Pro residues predominate over residues 12 to 21; the sequence is QVPPPPPMSP. The segment covering 22–31 has biased composition (low complexity); it reads PLSQMHQQMS. Positions 53–64 are enriched in pro residues; it reads APPPPPPGPPPA. Positions 157–173 are enriched in low complexity; the sequence is SSQTWQTTSSSSTNTAS. 3 stretches are compositionally biased toward polar residues: residues 174-183, 191-205, and 318-327; these read VNDNVQSNAP, NNSA…SSNV, and HGRQGSINSR. Basic and acidic residues predominate over residues 328–337; that stretch reads GNDKGTHDGS. Residues 338 to 363 are compositionally biased toward polar residues; the sequence is DSPNTPSSQSRSTTIPTFPDGSSFSN. The segment covering 396-408 has biased composition (low complexity); that stretch reads SSTPKSSTLSVSP. Over residues 409–418 the composition is skewed to polar residues; that stretch reads HSSRFGNNVR. Composition is skewed to polar residues over residues 613–622 and 630–641; these read SQQSTWSAGD and GTSSSMSRQQNT. Composition is skewed to basic and acidic residues over residues 642 to 652 and 698 to 714; these read LKDDQSEEARL and VDFD…KNTD. Residues 846-860 are compositionally biased toward polar residues; sequence RSQTAGDLSPISQMP. Over residues 917–928 the composition is skewed to acidic residues; that stretch reads QSDDDSGDDSDD. The segment covering 977 to 986 has biased composition (polar residues); sequence VSFNSPQSAR. Residues 1001-1012 show a composition bias toward basic and acidic residues; it reads PKSDMWDSEDGK. Residues 1086 to 1111 are compositionally biased toward polar residues; sequence ATPLNSLPPSRVQSMYNESDTLGSDE. A compositionally biased stretch (basic and acidic residues) spans 1142 to 1152; it reads SIREKARGAHE. A compositionally biased stretch (polar residues) spans 1158 to 1188; sequence TQTSMAAPQGLSRSGGTPATETQPTQNNSSA. Positions 1238–1507 constitute a Protein kinase domain; it reads WFKGQLIGKG…NKLLSQHPFC (270 aa). Residues 1244 to 1252 and Lys1267 contribute to the ATP site; that span reads IGKGTYGRV.

This sequence belongs to the protein kinase superfamily. STE Ser/Thr protein kinase family. MAP kinase kinase kinase subfamily. Interacts with the adapter protein MST50 and MIP11.

The catalysed reaction is L-seryl-[protein] + ATP = O-phospho-L-seryl-[protein] + ADP + H(+). It carries out the reaction L-threonyl-[protein] + ATP = O-phospho-L-threonyl-[protein] + ADP + H(+). Mitogen-activated protein kinase kinase kinase; part of the MCK1-MKK2-MPS1 MAP kinase (MAPK) signal transduction cascade that is essential for appressorium formation, penetration and invasive growth. Beside its role in pathogenesis, the MPS1 cascade is active in conidiation and cellular stress responses. Targets downstream of the the MPS1-MAPK pathway include transcription factors MIG1 and SWI6, as well as GSK1 and MPG1. The chain is Mitogen-activated protein kinase kinae kinase MCK1 from Pyricularia oryzae (strain 70-15 / ATCC MYA-4617 / FGSC 8958) (Rice blast fungus).